A 401-amino-acid polypeptide reads, in one-letter code: Phosphoglycerate kinase (401 aa).

Substrate contacts are provided by residues aspartate 23–asparagine 25, arginine 38, histidine 61–arginine 64, arginine 120, and arginine 153. ATP contacts are provided by residues lysine 203, glutamate 325, and glycine 355 to threonine 358.

This sequence belongs to the phosphoglycerate kinase family. As to quaternary structure, monomer.

The protein resides in the cytoplasm. The catalysed reaction is (2R)-3-phosphoglycerate + ATP = (2R)-3-phospho-glyceroyl phosphate + ADP. It participates in carbohydrate degradation; glycolysis; pyruvate from D-glyceraldehyde 3-phosphate: step 2/5. The chain is Phosphoglycerate kinase from Rhizobium johnstonii (strain DSM 114642 / LMG 32736 / 3841) (Rhizobium leguminosarum bv. viciae).